The primary structure comprises 222 residues: uncharacterized protein (222 aa).

The segment at 142–222 (ARRGGCVHPP…LPDPPSAGHL (81 aa)) is disordered. Low complexity predominate over residues 160–169 (QSRSISSRRA). The span at 182 to 196 (PRRRPHRHRTRPQTR) shows a compositional bias: basic residues.

Belongs to the Rv1128c/1148c/1588c/1702c/1945/3466 family.

This is an uncharacterized protein from Mycobacterium tuberculosis (strain ATCC 25618 / H37Rv).